Consider the following 354-residue polypeptide: Dihydroorotate dehydrogenase (quinone) (354 aa).

FMN is bound by residues 61–65 (AGYDK) and Ala85. Lys65 is a binding site for substrate. 110–114 (NRFGF) serves as a coordination point for substrate. Residues Asn139 and Asn170 each contribute to the FMN site. Substrate is bound at residue Asn170. The Nucleophile role is filled by Ser173. A substrate-binding site is contributed by Asn175. Residues Lys211 and Thr239 each contribute to the FMN site. 240-241 (NT) contacts substrate. Residues Gly261, Gly290, and 311–312 (YT) each bind FMN.

This sequence belongs to the dihydroorotate dehydrogenase family. Type 2 subfamily. As to quaternary structure, monomer. It depends on FMN as a cofactor.

It is found in the cell membrane. The catalysed reaction is (S)-dihydroorotate + a quinone = orotate + a quinol. It participates in pyrimidine metabolism; UMP biosynthesis via de novo pathway; orotate from (S)-dihydroorotate (quinone route): step 1/1. Catalyzes the conversion of dihydroorotate to orotate with quinone as electron acceptor. This Cereibacter sphaeroides (strain KD131 / KCTC 12085) (Rhodobacter sphaeroides) protein is Dihydroorotate dehydrogenase (quinone).